The following is a 459-amino-acid chain: Paired box protein Pax-8 (459 aa).

The segment at residues 9–135 (GHGGLNQLGG…SSINRIIRTK (127 aa)) is a DNA-binding region (paired). The interval 12–68 (GLNQLGGAFVNGRPLPEVVRQRIVDLAHQGVRPCDISRQLRVSHGCVSKILGRYYET) is PAI subdomain. Positions 87–135 (KVVEKIGDYKRQNPTMFAWEIRDRLLAEGVCDNDTVPSVSSINRIIRTK) are RED subdomain. Polar residues predominate over residues 159–182 (LIPSSAVTPPESPQSDSLGSTYSI). The disordered stretch occupies residues 159–223 (LIPSSAVTPP…QSSSSGPRKH (65 aa)). Ser-305 is modified (phosphoserine).

Interacts with WWTR1.

It is found in the nucleus. In terms of biological role, thought to encode a transcription factor. It may have a role in kidney cell differentiation. May play a regulatory role in mammalian development. The protein is Paired box protein Pax-8 (PAX8) of Canis lupus familiaris (Dog).